Consider the following 211-residue polypeptide: Dof zinc finger protein 5 (211 aa).

The tract at residues 37–101 (FVVAREKVEP…QRRLQDSAEA (65 aa)) is disordered. Over residues 68-80 (IKREAADRDEEQR) the composition is skewed to basic and acidic residues. The segment at 109-163 (LPCPRCRSRDTKFCYFNNYNVNQPRHFCKACHRYWTAGGALRNVPVGAGRRKNRP) adopts a Dof-type zinc-finger fold. The Zn(2+) site is built by cysteine 111, cysteine 114, cysteine 136, and cysteine 139. A disordered region spans residues 191 to 211 (SPTSPSPVYTDRWPVTPDRPF).

The protein resides in the nucleus. Its function is as follows. Transcription factor that may transactivate seed storage protein genes in developing seeds. This Oryza sativa subsp. japonica (Rice) protein is Dof zinc finger protein 5.